The chain runs to 41 residues: Competence-stimulating peptide type 1 (41 aa).

Positions 1–24 (MKNTVKLEQFVALKEKDLQKIKGG) are excised as a propeptide.

It belongs to the ComC family.

Its subcellular location is the secreted. In terms of biological role, acts as a pheromone, induces cells to develop competence for genetic transformation. The sequence is that of Competence-stimulating peptide type 1 (comC1) from Streptococcus pneumoniae.